The sequence spans 63 residues: Small ribosomal subunit protein eS30B (63 aa).

The segment at 1 to 35 is disordered; it reads MAKVHGSLARAGKVKSQTPKVEKTEKPKKPKGRAY. Ser16 carries the post-translational modification Phosphoserine. Phosphothreonine is present on Thr48.

It belongs to the eukaryotic ribosomal protein eS30 family. In terms of assembly, component of the small ribosomal subunit (SSU). Mature yeast ribosomes consist of a small (40S) and a large (60S) subunit. The 40S small subunit contains 1 molecule of ribosomal RNA (18S rRNA) and 33 different proteins (encoded by 57 genes). The large 60S subunit contains 3 rRNA molecules (25S, 5.8S and 5S rRNA) and 46 different proteins (encoded by 81 genes).

The protein localises to the cytoplasm. Functionally, component of the ribosome, a large ribonucleoprotein complex responsible for the synthesis of proteins in the cell. The small ribosomal subunit (SSU) binds messenger RNAs (mRNAs) and translates the encoded message by selecting cognate aminoacyl-transfer RNA (tRNA) molecules. The large subunit (LSU) contains the ribosomal catalytic site termed the peptidyl transferase center (PTC), which catalyzes the formation of peptide bonds, thereby polymerizing the amino acids delivered by tRNAs into a polypeptide chain. The nascent polypeptides leave the ribosome through a tunnel in the LSU and interact with protein factors that function in enzymatic processing, targeting, and the membrane insertion of nascent chains at the exit of the ribosomal tunnel. In Saccharomyces cerevisiae (strain ATCC 204508 / S288c) (Baker's yeast), this protein is Small ribosomal subunit protein eS30B.